Here is a 1218-residue protein sequence, read N- to C-terminus: MGESQSKQESNTRVAQHGSQQDVDPTFQTKRALERERSSPQVEQSFLGQLQSLLGWSSTSKDVPLSQLIREMDHESRRHSHQSKKKLDRSEHISEGTIPEIYEKRKETISHTQSMEQKYLFQNFTKLLLLQKCCPGGSEKLVRESWHPCVPEEGGHMIEIQDLFDPNLDTEKKPQLVIIEGAAGIGKSTLARQVKRAWEEGQLYRDRFQHVFFFSCRELAQCKQLSLAELIAQGQEVLTAPTRQILSRPEKLLFILDGIDEPAWVLEDQNPELCVHWSQAQPVHTLLGSLLGKSILPEASLMLTARTTALQKLIPSLGQPHRVEVLGFSEFERKDYFYKYFAKERNTIIDFNLIGSIPVLLTLCEVPWVCWLLCTCLEKQMQQGEVLSLTSQTTTALCLKYLSLTIPGQHLSTQLRTLCSLAAEGICQRRTLFSKSDLCKQGLAEDAIATFLKIGVLQRQPSSLSYSFAHLCLQEFFAAMSYILEDSEEARGDMGNDRTVETLVERYGRQNLFEAPTVRFLLGLLNTREMREMENIFACKFPWKTKLKLLRSIVGEPFCQPCHLGLFHCLYENQEEELLTETMLCFPLTASGPNHMEATVFQTNVKRLVIQTDMELMVVTFCITFSHVRSLRLKGKGQQEYKLTAPAMVLYRWTPISEASWKVLFSNLKCTRNLEELDLSGNPLSYSAVRSLCTALRQPGCRLKTLWLVDCGLTSRCCSFLASMLSAHSRLAELDLRLNDLGDNGVRQLCEGLRNPACNLSILRLDQASLSEQVITELRALETKNPKLFISSTWMSHMTMPTENTDGEESLTSSKQQQQQSGDKHMEPLGTDDDFWGPSGPVSTEVVDRERNLYRVRLPMAGSYHCPSTGLHFVVTRAVTIEIGFCAWSQFLHETPLQHSHMVAGPLFDIKAEHGAVTAVCLPHFVSLQEGKVDSSLFHVAHFQDHGMVLETPARVEPHFAVLENPSFSPMGVLLRMIPAVGHFIPITSITLIYYRLYLEDITFHLYLVPNDCTIRKAIDEEELKFQFVRINKPPPVDALYVGSRYIVSSSKEVEILPKELELCYRSPRESQLFSEIYVGNIGSGINLQLTDKKYMNLIWEALLKPGDLRPALPRMASAPKDAPALLHFVDQHREQLVARVTSVDPLLDKLHGLVLSEEDYETVRAEATNQDKMRKLFRGSRSWSWDCKDHFYQALKETHPHLIMDLLEKSGGVSVRL.

Polar residues predominate over residues 1–29 (MGESQSKQESNTRVAQHGSQQDVDPTFQT). 2 disordered regions span residues 1–44 (MGES…QVEQ) and 71–91 (EMDH…DRSE). Residues 77-87 (RRHSHQSKKKL) show a composition bias toward basic residues. In terms of domain architecture, NACHT spans 175 to 484 (QLVIIEGAAG…EFFAAMSYIL (310 aa)). 181 to 188 (GAAGIGKS) serves as a coordination point for ATP. LRR repeat units lie at residues 343 to 364 (KERN…LTLC), 673 to 693 (NLEE…RSLC), and 730 to 750 (RLAE…RQLC). Positions 799–815 (TMPTENTDGEESLTSSK) are enriched in polar residues. Residues 799–842 (TMPTENTDGEESLTSSKQQQQQSGDKHMEPLGTDDDFWGPSGPV) form a disordered region. The ZU5 stretch occupies residues 835 to 968 (FWGPSGPVST…HFAVLENPSF (134 aa)). An FIIND domain is found at 835 to 1118 (FWGPSGPVST…LRPALPRMAS (284 aa)). Residues 969–1118 (SPMGVLLRMI…LRPALPRMAS (150 aa)) form a UPA region. The 90-residue stretch at 1122-1211 (DAPALLHFVD…HLIMDLLEKS (90 aa)) folds into the CARD domain.

This sequence belongs to the NLRP family. As to quaternary structure, interacts (via LRR repeats) with BCL2 and BCL2L1 (via the loop between motifs BH4 and BH3). Interacts with NOD2; this interaction is enhanced in the presence of muramyl dipeptide (MDP) and increases IL1B release. Interacts with EIF2AK2/PKR; this interaction requires EIF2AK2 activity, is accompanied by EIF2AK2 autophosphorylation and promotes inflammasome assembly in response to danger-associated signals. Interacts with MEFV; this interaction targets Nlrp1a to degradation by autophagy, hence preventing excessive IL1B- and IL18-mediated inflammation. Interacts with DPP9; leading to inhibit activation of the inflammasome. DPP9 acts via formation of a ternary complex, composed of a DPP9 homodimer, one full-length NLRP1 protein, and one cleaved C-terminus of Nlrp1a (NACHT, LRR and PYD domains-containing protein 1a, C-terminus). Interacts with DPP8; leading to inhibit activation of the inflammasome, probably via formation of a ternary complex with DPP8. Interacts with the C-terminal part of Nlrp1a (NACHT, LRR and PYD domains-containing protein 1a, C-terminus) in absence of pathogens and other damage-associated signals. In terms of assembly, interacts with the N-terminal part of Nlrp1a (NACHT, LRR and PYD domains-containing protein 1a, N-terminus) in absence of pathogens and other damage-associated signals. Homomultimer; forms the Nlrp1a inflammasome polymeric complex, a filament composed of homopolymers of this form in response to pathogens and other damage-associated signals. The Nlrp1a inflammasome polymeric complex directly recruits pro-caspase-1 (proCASP1) independently of PYCARD/ASC. Interacts (via CARD domain) with CASP1 (via CARD domain); leading to CASP1 activation. In terms of processing, autocatalytically cleaved. Autocatalytic cleavage in FIIND region occurs constitutively, prior to activation signals, and is required for inflammasome activity (IL1B release), possibly by facilitating CASP1 binding. Both N- and C-terminal parts remain associated non-covalently. Post-translationally, ubiquitinated in response to pathogen-associated signals, leading to its degradation by the proteasome and subsequent release of the cleaved C-terminal part of the protein (NACHT, LRR and PYD domains-containing protein 1a, C-terminus), which polymerizes and forms the Nlrp1a inflammasome.

The protein resides in the cytoplasm. The protein localises to the cytosol. Its subcellular location is the nucleus. It is found in the inflammasome. Its activity is regulated as follows. Activated by pathogens and other damage-associated signals: activation promotes ubiquitination and degradation of the N-terminal part, releasing the cleaved C-terminal part of the protein (NACHT, LRR and PYD domains-containing protein 1a, C-terminus), which polymerizes and forms the Nlrp1a inflammasome. Nlrp1a inflammasome is inhibited by DPP8 and DPP9, which sequester the C-terminal fragment of Nlrp1a (NACHT, LRR and PYD domains-containing protein 1a, C-terminus) in a ternary complex, thereby preventing Nlrp1a oligomerization and activation. Nlrp1a inflammasome is strongly activated by Val-boroPro (Talabostat, PT-100), an inhibitor of dipeptidyl peptidases DPP8 and DPP9. Val-boroPro relieves inhibition of DPP8 and/or DPP9 by promoting disruption of the ternary complex, releasing its C-terminal part from autoinhibition. Not activated by cleavage by B.anthracis lethal toxin (LT) endopeptidase. Highly activated by Toxoplasma gondii. Acts as the sensor component of the Nlrp1a inflammasome, which mediates inflammasome activation in response to various pathogen-associated signals, leading to subsequent pyroptosis. Inflammasomes are supramolecular complexes that assemble in the cytosol in response to pathogens and other damage-associated signals and play critical roles in innate immunity and inflammation. Acts as a recognition receptor (PRR): recognizes specific pathogens and other damage-associated signals, such as Val-boroPro inhibitor, and mediates the formation of the inflammasome polymeric complex. In response to pathogen-associated signals, the N-terminal part of Nlrp1a is degraded by the proteasome, releasing the cleaved C-terminal part of the protein (NACHT, LRR and PYD domains-containing protein 1a, C-terminus), which polymerizes to initiate the formation of the inflammasome complex: the inflammasome directly recruits pro-caspase-1 (proCASP1) independently of PYCARD/ASC and promotes caspase-1 (CASP1) activation, which subsequently cleaves and activates inflammatory cytokines IL1B and IL18 and gasdermin-D (GSDMD), leading to pyroptosis. In the absence of GSDMD expression, the Nlrp1a inflammasome is able to recruit and activate CASP8, leading to activation of gasdermin-E (GSDME). In terms of biological role, constitutes the precursor of the Nlrp1a inflammasome, which mediates autoproteolytic processing within the FIIND domain to generate the N-terminal and C-terminal parts, which are associated non-covalently in absence of pathogens and other damage-associated signals. Functionally, regulatory part that prevents formation of the Nlrp1a inflammasome: in absence of pathogens and other damage-associated signals, interacts with the C-terminal part of Nlrp1a (NACHT, LRR and PYD domains-containing protein 1a, C-terminus), preventing activation of the Nlrp1a inflammasome. In response to pathogen-associated signals, this part is ubiquitinated by the N-end rule pathway and degraded by the proteasome, releasing the cleaved C-terminal part of the protein, which polymerizes and forms the Nlrp1a inflammasome. Its function is as follows. Constitutes the active part of the Nlrp1a inflammasome. In absence of pathogens and other damage-associated signals, interacts with the N-terminal part of Nlrp1a (NACHT, LRR and PYD domains-containing protein 1a, N-terminus), preventing activation of the Nlrp1a inflammasome. In response to pathogen-associated signals, the N-terminal part of Nlrp1a is degraded by the proteasome, releasing this form, which polymerizes to form the Nlrp1a inflammasome complex: the Nlrp1a inflammasome complex then directly recruits pro-caspase-1 (proCASP1) and promotes caspase-1 (CASP1) activation, leading to gasdermin-D (GSDMD) cleavage and subsequent pyroptosis. The polypeptide is NACHT, LRR and PYD domains-containing protein 1a allele 5 (Rattus norvegicus (Rat)).